A 391-amino-acid chain; its full sequence is Elongation factor Tu (391 aa).

A tr-type G domain is found at 10-201; that stretch reads KPHVNIGTIG…AVDAYIPTPE (192 aa). Residues 19 to 26 form a G1 region; the sequence is GHVDHGKT. 19-26 contacts GTP; the sequence is GHVDHGKT. Thr26 provides a ligand contact to Mg(2+). Residues 55–59 form a G2 region; that stretch reads GITIS. Positions 76–79 are G3; sequence DCPG. GTP contacts are provided by residues 76 to 80 and 131 to 134; these read DCPGH and NKVD. Positions 131-134 are G4; the sequence is NKVD. The tract at residues 169-171 is G5; that stretch reads SAL.

Belongs to the TRAFAC class translation factor GTPase superfamily. Classic translation factor GTPase family. EF-Tu/EF-1A subfamily. Monomer.

It localises to the cytoplasm. It catalyses the reaction GTP + H2O = GDP + phosphate + H(+). Its function is as follows. GTP hydrolase that promotes the GTP-dependent binding of aminoacyl-tRNA to the A-site of ribosomes during protein biosynthesis. In Rhizobium johnstonii (strain DSM 114642 / LMG 32736 / 3841) (Rhizobium leguminosarum bv. viciae), this protein is Elongation factor Tu.